Reading from the N-terminus, the 1025-residue chain is Putative receptor-like protein kinase At3g47110 (1025 aa).

The signal sequence occupies residues methionine 1–alanine 30. Residues glutamine 31–lysine 653 lie on the Extracellular side of the membrane. N-linked (GlcNAc...) asparagine glycosylation is found at asparagine 63 and asparagine 103. LRR repeat units follow at residues leucine 104–leucine 128, arginine 130–asparagine 151, cysteine 152–serine 175, leucine 176–leucine 200, serine 202–leucine 224, glutamine 226–leucine 248, serine 249–serine 271, leucine 273–isoleucine 297, serine 298–asparagine 323, and leucine 325–phenylalanine 344. N-linked (GlcNAc...) asparagine glycosylation is found at asparagine 135 and asparagine 151. 2 N-linked (GlcNAc...) asparagine glycosylation sites follow: asparagine 188 and asparagine 199. Asparagine 247 carries an N-linked (GlcNAc...) asparagine glycan. A glycan (N-linked (GlcNAc...) asparagine) is linked at asparagine 296. Asparagine 331, asparagine 336, asparagine 350, and asparagine 374 each carry an N-linked (GlcNAc...) asparagine glycan. LRR repeat units follow at residues cysteine 351–asparagine 374, serine 376–leucine 400, valine 401–leucine 424, glutamate 426–isoleucine 448, serine 449–cysteine 472, serine 473–leucine 496, serine 498–leucine 520, lysine 521–cysteine 544, serine 546–leucine 567, threonine 568–lysine 593, and glutamine 595–asparagine 616. Residues asparagine 447, asparagine 458, asparagine 486, and asparagine 503 are each glycosylated (N-linked (GlcNAc...) asparagine). N-linked (GlcNAc...) asparagine glycans are attached at residues asparagine 579, asparagine 590, asparagine 598, and asparagine 616. A helical transmembrane segment spans residues isoleucine 654 to valine 674. The Cytoplasmic portion of the chain corresponds to tyrosine 675–threonine 1025. Threonine 716 is subject to Phosphothreonine. In terms of domain architecture, Protein kinase spans phenylalanine 719 to phenylalanine 1020. Residues isoleucine 725–valine 733 and lysine 748 contribute to the ATP site. 2 positions are modified to phosphotyrosine: tyrosine 798 and tyrosine 843. Aspartate 856 serves as the catalytic Proton acceptor. Tyrosine 904 is subject to Phosphotyrosine.

This sequence belongs to the protein kinase superfamily. Ser/Thr protein kinase family.

Its subcellular location is the cell membrane. It catalyses the reaction L-seryl-[protein] + ATP = O-phospho-L-seryl-[protein] + ADP + H(+). It carries out the reaction L-threonyl-[protein] + ATP = O-phospho-L-threonyl-[protein] + ADP + H(+). The polypeptide is Putative receptor-like protein kinase At3g47110 (Arabidopsis thaliana (Mouse-ear cress)).